A 538-amino-acid polypeptide reads, in one-letter code: MFSLFHHPQLRPRHYAGGVVVISFIILFYGGALSSIFALGGELQWRAWFTDDYLQHLILFSFGQALLSTVLSIFFGLLLARALFYKPFLGKKWLLKLMSLTFVLPALVVIFGLIGIYGSSGWLAWLANLFGMSWQGHIYGLSGILIAHLFFNIPLAAQLFLQSLQSIPYQQRQLAAQLNLQGWQFVKLVEWPVFRQQCLPTFSLIFMLCFTSFTVVLTLGGGPQYTTLETAIYQAILFEFDLPKAALFAMLQFVFCLILFSLTSRFSLSNQNGLSNSNIWFEKPKSAVKIFHILVLLVFVFFLFSPVLNILISALSSSNLLTVWHNSQLWRALGYSLSIAPLSALLALTMAIALLLLSRRLEWLHYQKISQFIINAGMVILAIPILVLAMGLFLLLQDRDFSNIDLFIIVVFCNALSAMPFVLRILSAPFHNNMRYYENLCNSLGIVGWQRFYLIEWKTLRAPLRYAFALGLALSLGDFTAIALFGNQEFTSLPHLLYQQLGNYRNQDAAVTAGILLLLCGILFAFIHTYRDADDLSK.

12 helical membrane passes run 19–39 (VVVISFIILFYGGALSSIFAL), 57–77 (LILFSFGQALLSTVLSIFFGL), 97–117 (LMSLTFVLPALVVIFGLIGIY), 141–161 (LSGILIAHLFFNIPLAAQLFL), 202–222 (FSLIFMLCFTSFTVVLTLGGG), 242–262 (LPKAALFAMLQFVFCLILFSL), 293–313 (ILVLLVFVFFLFSPVLNILIS), 337–357 (LSIAPLSALLALTMAIALLLL), 376–396 (AGMVILAIPILVLAMGLFLLL), 406–426 (LFIIVVFCNALSAMPFVLRIL), 466–486 (YAFALGLALSLGDFTAIALFG), and 509–529 (AAVTAGILLLLCGILFAFIHT). An ABC transmembrane type-1 1 domain is found at 58 to 263 (ILFSFGQALL…VFCLILFSLT (206 aa)). The ABC transmembrane type-1 2 domain maps to 333 to 528 (LGYSLSIAPL…LCGILFAFIH (196 aa)).

It belongs to the binding-protein-dependent transport system permease family. CysTW subfamily. In terms of assembly, the complex is composed of two ATP-binding proteins (ThiQ), two transmembrane proteins (ThiP) and a solute-binding protein (ThiB).

It localises to the cell inner membrane. Its function is as follows. Part of the ABC transporter complex ThiBPQ involved in thiamine import. Probably responsible for the translocation of the substrate across the membrane. The protein is Thiamine transport system permease protein ThiP (thiP) of Haemophilus influenzae (strain ATCC 51907 / DSM 11121 / KW20 / Rd).